Here is a 339-residue protein sequence, read N- to C-terminus: Protein FAM76B (339 aa).

N-acetylalanine is present on A2. A phosphoserine mark is found at S22 and S148. The segment at 144–243 is disordered; it reads EQRKSLGSSH…INQSADSGGT (100 aa). The span at 148-160 shows a compositional bias: low complexity; that stretch reads SLGSSHSNSSSSS. A compositionally biased stretch (basic residues) spans 167-189; it reads HHSKHHHHHHHHHHRHSSGHHKV. S193 carries the phosphoserine modification. T215 is modified (phosphothreonine). Residues 215–224 are compositionally biased toward basic and acidic residues; the sequence is TPKKKPKLES. The segment covering 228–243 has biased composition (polar residues); it reads NGDSSSINQSADSGGT. Positions 248-328 form a coiled coil; that stretch reads LISQLKEEVM…QVAALSKGKK (81 aa).

This sequence belongs to the FAM76 family. As to quaternary structure, interacts with HNRNPA2B1 (via C-terminus); the interaction results in retention of HNRNPA2B1 in the nucleus and inhibition of the NF-kappa-B-mediated inflammatory pathway.

Its subcellular location is the nucleus speckle. Its function is as follows. Negatively regulates the NF-kappa-B-mediated inflammatory pathway by preventing the translocation of HNRNPA2B1 from the nucleus to the cytoplasm. Inhibits the PI3K/Akt/NF-kappa-B pathway-mediated polarization of M1 macrophages by binding to and stabilizing PIK3CD mRNA, resulting in increased levels of PIK3CD protein and increased levels of phosphorylated downstream target AKT which leads to decreased NF-kappa-B signaling. The sequence is that of Protein FAM76B (Fam76b) from Mus musculus (Mouse).